The following is a 329-amino-acid chain: (+)-eremophilene synthase (329 aa).

Residues Asp91 and Glu96 each coordinate Mg(2+). Positions Asp91–Asp95 match the DDXXD motif motif. Arg185 serves as a coordination point for substrate. Mg(2+)-binding residues include Asn231 and Ser235. Lys238 lines the substrate pocket. Glu239 contacts Mg(2+). Substrate is bound at residue Arg317–Tyr318.

This sequence belongs to the terpene synthase family. It depends on Mg(2+) as a cofactor.

The catalysed reaction is (2E,6E)-farnesyl diphosphate = (+)-eremophilene + diphosphate. It functions in the pathway secondary metabolite biosynthesis; terpenoid biosynthesis. Catalyzes the conversion of (2E,6E)-farnesyl diphosphate (FPP) to yield the bicyclic sesquiterpene eremophilene via a 1,10-cyclization, which requires the abstraction of the pyrophosphate from FPP to yield the (E,E)-germacradienyl cation. The only accepted substrate is farnesyl diphosphate (FPP). This is (+)-eremophilene synthase from Sorangium cellulosum (strain So ce56) (Polyangium cellulosum (strain So ce56)).